The following is a 159-amino-acid chain: Globin-like protein (159 aa).

Residues 1-152 (MSMNRQEISD…FNAESQTHLK (152 aa)) enclose the Globin domain. His-101 contacts heme.

The protein belongs to the globin family. As to quaternary structure, homodimer. In terms of tissue distribution, expressed mainly in a subset of neuronal cells and in head muscular tissue.

Its subcellular location is the cytoplasm. Its function is as follows. May be a globin and may play a role in oxygen transport. In Caenorhabditis elegans, this protein is Globin-like protein (glb-1).